A 117-amino-acid polypeptide reads, in one-letter code: Large ribosomal subunit protein uL18 (117 aa).

It belongs to the universal ribosomal protein uL18 family. Part of the 50S ribosomal subunit; part of the 5S rRNA/L5/L18/L25 subcomplex. Contacts the 5S and 23S rRNAs.

Functionally, this is one of the proteins that bind and probably mediate the attachment of the 5S RNA into the large ribosomal subunit, where it forms part of the central protuberance. This chain is Large ribosomal subunit protein uL18, found in Vibrio campbellii (strain ATCC BAA-1116).